Here is a 329-residue protein sequence, read N- to C-terminus: Short-chain dehydrogenase/reductase tropG (329 aa).

NADP(+) contacts are provided by Lys-57, Asp-86, Asn-113, Tyr-203, and Lys-207. Residue Tyr-203 is the Proton acceptor of the active site. Catalysis depends on Lys-207, which acts as the Lowers pKa of active site Tyr.

It belongs to the short-chain dehydrogenases/reductases (SDR) family.

It functions in the pathway secondary metabolite biosynthesis. Short-chain dehydrogenase/reductase; part of the gene cluster that mediates the biosynthesis of the tropolone class of fungal maleic anhydrides. The pathway begins with the synthesis of 3-methylorcinaldehyde by the non-reducing polyketide synthase (PKS) tropA. 3-methylorcinaldehyde is the substrate for the FAD-dependent monooxygenase tropB to yield a dearomatized hydroxycyclohexadione. The 2-oxoglutarate-dependent dioxygenase tropC then performs the oxidative ring expansion to provide the first tropolone metabolite stipitaldehyde. Trop D converts stipitaldehyde into stipitacetal which is in turn converted to stipitalide by the short-chain dehydrogenase/reductase tropE. The next steps involve tropF, tropG, tropH, tropI and tropJ to form successive tropolone maleic anhydrides including stipitaldehydic, stipitatonic and stipitatic acids. The chain is Short-chain dehydrogenase/reductase tropG from Talaromyces stipitatus (strain ATCC 10500 / CBS 375.48 / QM 6759 / NRRL 1006) (Penicillium stipitatum).